The following is a 364-amino-acid chain: Aminomethyltransferase (364 aa).

Belongs to the GcvT family. In terms of assembly, the glycine cleavage system is composed of four proteins: P, T, L and H.

It carries out the reaction N(6)-[(R)-S(8)-aminomethyldihydrolipoyl]-L-lysyl-[protein] + (6S)-5,6,7,8-tetrahydrofolate = N(6)-[(R)-dihydrolipoyl]-L-lysyl-[protein] + (6R)-5,10-methylene-5,6,7,8-tetrahydrofolate + NH4(+). Its function is as follows. The glycine cleavage system catalyzes the degradation of glycine. The polypeptide is Aminomethyltransferase (Salmonella enteritidis PT4 (strain P125109)).